A 1058-amino-acid chain; its full sequence is DNA primase (1058 aa).

A CHC2-type zinc finger spans residues 988–1028 (CLRFKHGRASRATARTFVALSVGANNRLCVSLCQQCFAAKC).

It belongs to the herpesviridae DNA primase family. In terms of assembly, associates with the helicase and the primase-associated factor to form the helicase-primase factor.

The protein localises to the host nucleus. Essential component of the helicase/primase complex. Unwinds the DNA at the replication forks and generates single-stranded DNA for both leading and lagging strand synthesis. The primase initiates primer synthesis and thereby produces large amount of short RNA primers on the lagging strand that the polymerase elongates using dNTPs. The sequence is that of DNA primase from Homo sapiens (Human).